Here is a 145-residue protein sequence, read N- to C-terminus: D-aminoacyl-tRNA deacylase (145 aa).

The short motif at 137–138 is the Gly-cisPro motif, important for rejection of L-amino acids element; it reads GP.

The protein belongs to the DTD family. In terms of assembly, homodimer.

Its subcellular location is the cytoplasm. It catalyses the reaction glycyl-tRNA(Ala) + H2O = tRNA(Ala) + glycine + H(+). The catalysed reaction is a D-aminoacyl-tRNA + H2O = a tRNA + a D-alpha-amino acid + H(+). Functionally, an aminoacyl-tRNA editing enzyme that deacylates mischarged D-aminoacyl-tRNAs. Also deacylates mischarged glycyl-tRNA(Ala), protecting cells against glycine mischarging by AlaRS. Acts via tRNA-based rather than protein-based catalysis; rejects L-amino acids rather than detecting D-amino acids in the active site. By recycling D-aminoacyl-tRNA to D-amino acids and free tRNA molecules, this enzyme counteracts the toxicity associated with the formation of D-aminoacyl-tRNA entities in vivo and helps enforce protein L-homochirality. This Dichelobacter nodosus (strain VCS1703A) protein is D-aminoacyl-tRNA deacylase.